The primary structure comprises 413 residues: Putative ankyrin repeat protein L92 (413 aa).

ANK repeat units follow at residues 1 to 28, 32 to 67, 68 to 104, 105 to 134, 137 to 170, 174 to 208, 212 to 242, and 246 to 275; these read MCACKFATYNSNIGAVKLLLDKGADINC, DGMSALSAVCKNLDLEFRSDFDTIKLLIERGADVNL, TVDGHYTPLMWLIKNLSENDDRFSESKISSIKNLFES, DDDDYFFENKRKNKYNALKLLLDNGANIEA, DGETPLLLACKLSSEITSTKHIKILLKKGAKTNI, DRKTPLMLLCKNCQQYLENEAVDVLIKYGKANINY, IGETALIYLCRISFMSESVQFLLEKGANPNI, and SGNTALHYAVKRHEFEMVEILLRYNASPEI.

The protein is Putative ankyrin repeat protein L92 of Acanthamoeba polyphaga mimivirus (APMV).